Here is a 437-residue protein sequence, read N- to C-terminus: Serine carboxypeptidase-like 7 (437 aa).

An N-terminal signal peptide occupies residues 1–25 (MANDYVSTVLLLLSLLIFLSQRTDS). 3 cysteine pairs are disulfide-bonded: C84–C327, C248–C262, and C286–C293. Residue N105 is glycosylated (N-linked (GlcNAc...) asparagine). S180 is a catalytic residue. An N-linked (GlcNAc...) asparagine glycan is attached at N346. The active site involves D362. Residue N378 is glycosylated (N-linked (GlcNAc...) asparagine). H415 is an active-site residue.

It belongs to the peptidase S10 family. As to expression, ubiquitous.

It localises to the secreted. In terms of biological role, probable carboxypeptidase. The chain is Serine carboxypeptidase-like 7 (SCPL7) from Arabidopsis thaliana (Mouse-ear cress).